The chain runs to 356 residues: S-adenosylmethionine:tRNA ribosyltransferase-isomerase (356 aa).

It belongs to the QueA family. In terms of assembly, monomer.

It localises to the cytoplasm. The enzyme catalyses 7-aminomethyl-7-carbaguanosine(34) in tRNA + S-adenosyl-L-methionine = epoxyqueuosine(34) in tRNA + adenine + L-methionine + 2 H(+). It functions in the pathway tRNA modification; tRNA-queuosine biosynthesis. In terms of biological role, transfers and isomerizes the ribose moiety from AdoMet to the 7-aminomethyl group of 7-deazaguanine (preQ1-tRNA) to give epoxyqueuosine (oQ-tRNA). This Escherichia coli O6:H1 (strain CFT073 / ATCC 700928 / UPEC) protein is S-adenosylmethionine:tRNA ribosyltransferase-isomerase.